The primary structure comprises 313 residues: Interferon-inducible double-stranded RNA-dependent protein kinase activator A (313 aa).

A disordered region spans residues 1 to 20 (MSHSRHRAEAPPLQREDSGT). 3 sufficient for self-association and interaction with TARBP2 regions span residues 1-103 (MSHS…KANA), 102-195 (NASI…FSNI), and 195-313 (ISPE…AERK). The residue at position 18 (S18) is a Phosphoserine. DRBM domains lie at 34-101 (TPIQ…ILKA), 126-194 (NPIG…KFSN), and 240-308 (DYIQ…YLKI). 3 positions are modified to phosphoserine: S167, S246, and S287.

The protein belongs to the PRKRA family. As to quaternary structure, homodimer. Interacts with DICER1, AGO2 and TARBP2. Also able to interact with dsRNA. Interacts with EIF2AK2/PKR through its DRBM domains. Interacts with DUS2L (via DRBM domain). Interacts with UBC9. Forms a complex with UBC9 and p53/TP53. Post-translationally, phosphorylated at Ser-246 in unstressed cells and at Ser-287 in stressed cells. Phosphorylation at Ser-246 appears to be a prerequisite for subsequent phosphorylation at Ser-287. Phosphorylation at Ser-246 and Ser-287 are necessary for activation of EIF2AK2/PKR under conditions of stress. Expressed in brain, heart, kidney, liver, lung, muscle, spleen and testis.

Its subcellular location is the cytoplasm. It is found in the perinuclear region. Functionally, required for siRNA production by DICER1 and for subsequent siRNA-mediated post-transcriptional gene silencing. Does not seem to be required for processing of pre-miRNA to miRNA by DICER1. Activates EIF2AK2/PKR in the absence of double-stranded RNA (dsRNA), leading to phosphorylation of EIF2S1/EFI2-alpha and inhibition of translation and induction of apoptosis. Promotes UBC9-p53/TP53 association and sumoylation and phosphorylation of p53/TP53 at 'Lys-386' at 'Ser-392' respectively and enhances its activity in a EIF2AK2/PKR-dependent manner. The polypeptide is Interferon-inducible double-stranded RNA-dependent protein kinase activator A (Prkra) (Mus musculus (Mouse)).